The chain runs to 222 residues: 7-cyano-7-deazaguanine synthase (222 aa).

8-18 (LSGGLDSTTCL) contributes to the ATP binding site. Zn(2+) is bound by residues Cys-186, Cys-194, Cys-197, and Cys-200.

It belongs to the QueC family. In terms of assembly, homodimer. Zn(2+) serves as cofactor.

It carries out the reaction 7-carboxy-7-deazaguanine + NH4(+) + ATP = 7-cyano-7-deazaguanine + ADP + phosphate + H2O + H(+). The protein operates within purine metabolism; 7-cyano-7-deazaguanine biosynthesis. In terms of biological role, catalyzes the ATP-dependent conversion of 7-carboxy-7-deazaguanine (CDG) to 7-cyano-7-deazaguanine (preQ(0)). This is 7-cyano-7-deazaguanine synthase from Acetivibrio thermocellus (strain ATCC 27405 / DSM 1237 / JCM 9322 / NBRC 103400 / NCIMB 10682 / NRRL B-4536 / VPI 7372) (Clostridium thermocellum).